A 240-amino-acid chain; its full sequence is Methylthioribulose-1-phosphate dehydratase (240 aa).

A compositionally biased stretch (basic and acidic residues) spans Met1–Asn10. The tract at residues Met1–Glu20 is disordered. Position 100 (Cys100) interacts with substrate. Zn(2+)-binding residues include His117 and His119. The Proton donor/acceptor role is filled by Glu146. A Zn(2+)-binding site is contributed by His202.

This sequence belongs to the aldolase class II family. MtnB subfamily. It depends on Zn(2+) as a cofactor.

Its subcellular location is the cytoplasm. It catalyses the reaction 5-(methylsulfanyl)-D-ribulose 1-phosphate = 5-methylsulfanyl-2,3-dioxopentyl phosphate + H2O. It functions in the pathway amino-acid biosynthesis; L-methionine biosynthesis via salvage pathway; L-methionine from S-methyl-5-thio-alpha-D-ribose 1-phosphate: step 2/6. Its function is as follows. Catalyzes the dehydration of methylthioribulose-1-phosphate (MTRu-1-P) into 2,3-diketo-5-methylthiopentyl-1-phosphate (DK-MTP-1-P). This is Methylthioribulose-1-phosphate dehydratase from Aspergillus fumigatus (strain CBS 144.89 / FGSC A1163 / CEA10) (Neosartorya fumigata).